We begin with the raw amino-acid sequence, 47 residues long: Large ribosomal subunit protein bL34 (47 aa).

Belongs to the bacterial ribosomal protein bL34 family.

The protein is Large ribosomal subunit protein bL34 of Mycolicibacterium vanbaalenii (strain DSM 7251 / JCM 13017 / BCRC 16820 / KCTC 9966 / NRRL B-24157 / PYR-1) (Mycobacterium vanbaalenii).